The chain runs to 156 residues: Crossover junction endodeoxyribonuclease RuvC (156 aa).

Residues Asp9, Glu69, and Asp141 contribute to the active site. Mg(2+) is bound by residues Asp9, Glu69, and Asp141.

Belongs to the RuvC family. Homodimer which binds Holliday junction (HJ) DNA. The HJ becomes 2-fold symmetrical on binding to RuvC with unstacked arms; it has a different conformation from HJ DNA in complex with RuvA. In the full resolvosome a probable DNA-RuvA(4)-RuvB(12)-RuvC(2) complex forms which resolves the HJ. Mg(2+) is required as a cofactor.

It localises to the cytoplasm. It carries out the reaction Endonucleolytic cleavage at a junction such as a reciprocal single-stranded crossover between two homologous DNA duplexes (Holliday junction).. The RuvA-RuvB-RuvC complex processes Holliday junction (HJ) DNA during genetic recombination and DNA repair. Endonuclease that resolves HJ intermediates. Cleaves cruciform DNA by making single-stranded nicks across the HJ at symmetrical positions within the homologous arms, yielding a 5'-phosphate and a 3'-hydroxyl group; requires a central core of homology in the junction. The consensus cleavage sequence is 5'-(A/T)TT(C/G)-3'. Cleavage occurs on the 3'-side of the TT dinucleotide at the point of strand exchange. HJ branch migration catalyzed by RuvA-RuvB allows RuvC to scan DNA until it finds its consensus sequence, where it cleaves and resolves the cruciform DNA. The protein is Crossover junction endodeoxyribonuclease RuvC of Acaryochloris marina (strain MBIC 11017).